The sequence spans 791 residues: ABC multidrug transporter mdr2 (791 aa).

A glycan (N-linked (GlcNAc...) asparagine) is linked at Asn-147. The next 2 helical transmembrane spans lie at 182 to 202 (ALAF…PFSI) and 220 to 240 (LFGL…TLGA). The region spanning 182 to 471 (ALAFLFLLVS…LSSFYSELMK (290 aa)) is the ABC transmembrane type-1 domain. A glycan (N-linked (GlcNAc...) asparagine) is linked at Asn-303. Transmembrane regions (helical) follow at residues 307 to 324 (GLRA…MAYV) and 326 to 346 (LKLS…AFFY). 2 N-linked (GlcNAc...) asparagine glycosylation sites follow: Asn-352 and Asn-421. 2 helical membrane passes run 422-442 (MTIL…AITI) and 445-465 (LTSF…LSSF). The ABC transporter domain maps to 504–741 (IRFENVTFSY…PDGAFTKLME (238 aa)). Asn-508 is a glycosylation site (N-linked (GlcNAc...) asparagine). 539–546 (GPSGGGKS) serves as a coordination point for ATP. An N-linked (GlcNAc...) asparagine glycan is attached at Asn-692. Residues 754-769 (ANTPANPVAQETSWDL) are compositionally biased toward polar residues. A disordered region spans residues 754-791 (ANTPANPVAQETSWDLQSDDGTEISEDTNIPSEPRTID). Residues 770–779 (QSDDGTEISE) show a composition bias toward acidic residues.

Belongs to the ABC transporter superfamily. ABCB family. Mitochondrial peptide exporter (TC 3.A.1.212) subfamily.

The protein resides in the cell membrane. In terms of biological role, pleiotropic ABC efflux transporter that may be involved in A.fumigatus adaptation to azoles. This Aspergillus fumigatus (strain ATCC MYA-4609 / CBS 101355 / FGSC A1100 / Af293) (Neosartorya fumigata) protein is ABC multidrug transporter mdr2.